Consider the following 225-residue polypeptide: Protein-L-isoaspartate O-methyltransferase (225 aa).

Ser-75 is an active-site residue.

The protein belongs to the methyltransferase superfamily. L-isoaspartyl/D-aspartyl protein methyltransferase family.

The protein localises to the cytoplasm. The enzyme catalyses [protein]-L-isoaspartate + S-adenosyl-L-methionine = [protein]-L-isoaspartate alpha-methyl ester + S-adenosyl-L-homocysteine. In terms of biological role, catalyzes the methyl esterification of L-isoaspartyl residues in peptides and proteins that result from spontaneous decomposition of normal L-aspartyl and L-asparaginyl residues. It plays a role in the repair and/or degradation of damaged proteins. This chain is Protein-L-isoaspartate O-methyltransferase, found in Xanthomonas axonopodis pv. citri (strain 306).